The chain runs to 476 residues: Glutamate--tRNA ligase (476 aa).

The 'HIGH' region motif lies at 9–19; that stretch reads PSPTGTLHIGT. The 'KMSKS' region motif lies at 248-252; the sequence is KLSKR. Lys-251 lines the ATP pocket.

It belongs to the class-I aminoacyl-tRNA synthetase family. Glutamate--tRNA ligase type 1 subfamily. As to quaternary structure, monomer.

It localises to the cytoplasm. It catalyses the reaction tRNA(Glu) + L-glutamate + ATP = L-glutamyl-tRNA(Glu) + AMP + diphosphate. Functionally, catalyzes the attachment of glutamate to tRNA(Glu) in a two-step reaction: glutamate is first activated by ATP to form Glu-AMP and then transferred to the acceptor end of tRNA(Glu). The chain is Glutamate--tRNA ligase from Prochlorococcus marinus (strain MIT 9303).